The sequence spans 989 residues: DNA-directed RNA polymerase subunit beta' (989 aa).

Positions 383, 385, and 387 each coordinate Mg(2+).

It belongs to the RNA polymerase beta' chain family. The RNAP catalytic core consists of 2 alpha, 1 beta, 1 beta' and 1 omega subunit. When a sigma factor is associated with the core the holoenzyme is formed, which can initiate transcription. Requires Mg(2+) as cofactor.

The enzyme catalyses RNA(n) + a ribonucleoside 5'-triphosphate = RNA(n+1) + diphosphate. Functionally, DNA-dependent RNA polymerase catalyzes the transcription of DNA into RNA using the four ribonucleoside triphosphates as substrates. In Leuconostoc pseudomesenteroides, this protein is DNA-directed RNA polymerase subunit beta' (rpoC).